Consider the following 328-residue polypeptide: Malate dehydrogenase (328 aa).

12-18 (GAAGQIG) contributes to the NAD(+) binding site. Residues Arg92 and Arg98 each coordinate substrate. Residues Asn105, Gln112, and 129–131 (TGN) contribute to the NAD(+) site. Substrate is bound by residues Asn131 and Arg162. Catalysis depends on His187, which acts as the Proton acceptor.

This sequence belongs to the LDH/MDH superfamily. MDH type 2 family.

The catalysed reaction is (S)-malate + NAD(+) = oxaloacetate + NADH + H(+). In terms of biological role, catalyzes the reversible oxidation of malate to oxaloacetate. This Nocardioides sp. (strain ATCC BAA-499 / JS614) protein is Malate dehydrogenase.